The sequence spans 269 residues: 3-methyl-2-oxobutanoate hydroxymethyltransferase (269 aa).

Mg(2+)-binding residues include D43 and D82. 3-methyl-2-oxobutanoate is bound by residues D43–S44, D82, and K110. A Mg(2+)-binding site is contributed by E112. Residue E179 is the Proton acceptor of the active site.

Belongs to the PanB family. In terms of assembly, homodecamer; pentamer of dimers. Requires Mg(2+) as cofactor.

Its subcellular location is the cytoplasm. It carries out the reaction 3-methyl-2-oxobutanoate + (6R)-5,10-methylene-5,6,7,8-tetrahydrofolate + H2O = 2-dehydropantoate + (6S)-5,6,7,8-tetrahydrofolate. Its pathway is cofactor biosynthesis; (R)-pantothenate biosynthesis; (R)-pantoate from 3-methyl-2-oxobutanoate: step 1/2. Catalyzes the reversible reaction in which hydroxymethyl group from 5,10-methylenetetrahydrofolate is transferred onto alpha-ketoisovalerate to form ketopantoate. The polypeptide is 3-methyl-2-oxobutanoate hydroxymethyltransferase (Acinetobacter baylyi (strain ATCC 33305 / BD413 / ADP1)).